We begin with the raw amino-acid sequence, 203 residues long: Large ribosomal subunit protein bL25 (203 aa).

The protein belongs to the bacterial ribosomal protein bL25 family. CTC subfamily. As to quaternary structure, part of the 50S ribosomal subunit; part of the 5S rRNA/L5/L18/L25 subcomplex. Contacts the 5S rRNA. Binds to the 5S rRNA independently of L5 and L18.

Its function is as follows. This is one of the proteins that binds to the 5S RNA in the ribosome where it forms part of the central protuberance. The polypeptide is Large ribosomal subunit protein bL25 (Cereibacter sphaeroides (strain ATCC 17025 / ATH 2.4.3) (Rhodobacter sphaeroides)).